Reading from the N-terminus, the 89-residue chain is MKTLFLIITSFILLEVEGIKNGYPRDSKGCTFECGQDAKHGDDYCDKMCKTTLKGEGGDCDFEYAECWCDNIPDTVVTWKNKEPKCKQI.

The first 18 residues, 1–18 (MKTLFLIITSFILLEVEG), serve as a signal peptide directing secretion. Residues 20-87 (KNGYPRDSKG…TWKNKEPKCK (68 aa)) form the LCN-type CS-alpha/beta domain. Intrachain disulfides connect cysteine 30-cysteine 86, cysteine 34-cysteine 60, cysteine 45-cysteine 67, and cysteine 49-cysteine 69.

This sequence belongs to the long (4 C-C) scorpion toxin superfamily. Sodium channel inhibitor family. Expressed by the venom gland.

It localises to the secreted. In terms of biological role, inhibits voltage-gated sodium channels (Nav). This chain is Sodium channel toxin To13, found in Tityus obscurus (Amazonian scorpion).